A 1211-amino-acid chain; its full sequence is Periplasmic acid trehalase ATC1 (1211 aa).

The Cytoplasmic portion of the chain corresponds to 1-46 (MKRIRSLWFNAEASYSNLNNSPSLRNKNSTGNNSRSKNYRSFSRFD). Residues 47–67 (LINSILLLMMLFLLAIFVTAL) traverse the membrane as a helical segment. The Periplasmic portion of the chain corresponds to 68–1211 (YLTKSSRLTY…ATIKEIVLND (1144 aa)). The tract at residues 70 to 131 (TKSSRLTYSH…NTAYYDDENM (62 aa)) is required for cell surface targeting. N-linked (GlcNAc...) asparagine glycosylation is found at Asn98, Asn207, Asn238, Asn247, Asn255, Asn259, Asn325, Asn370, Asn376, and Asn488. 513-514 (WD) is a binding site for substrate. Asn539, Asn568, Asn628, and Asn638 each carry an N-linked (GlcNAc...) asparagine glycan. The Proton donor role is filled by Glu644. Residues Asn696 and Asn705 are each glycosylated (N-linked (GlcNAc...) asparagine). 711–712 (KQ) provides a ligand contact to substrate. Asn879, Asn897, Asn910, Asn972, Asn990, Asn1031, Asn1049, Asn1064, Asn1147, and Asn1157 each carry an N-linked (GlcNAc...) asparagine glycan.

Belongs to the glycosyl hydrolase 65 family. Glycosylated.

It localises to the membrane. It is found in the vacuole lumen. Its subcellular location is the periplasm. The enzyme catalyses alpha,alpha-trehalose + H2O = alpha-D-glucose + beta-D-glucose. Periplasmic acid trehalase that catalyzes hydrolysis of the disaccharide trehalose and required for growth on trehalose as carbon source. Growth on trehalose is strictly respiratory. The polypeptide is Periplasmic acid trehalase ATC1 (Saccharomyces cerevisiae (strain CEN.PK113-7D) (Baker's yeast)).